Here is a 487-residue protein sequence, read N- to C-terminus: uncharacterized protein (487 aa).

This is an uncharacterized protein from Bacillus subtilis (strain 168).